Consider the following 206-residue polypeptide: MNNIYQKDLGLQQYTKVFEDMLEFTSTRTPETNDEIWLVEHPAVFTQGKHGKPEHILNSHNIPIVATDRGGQVTYHGPGQAVIYFLLDIKRNKLGAKKLVTTVEQACINMLDKYYNLKAHIIDGAHGIYINNQKIASLGLRIKQGKSYHGIAINTNMDLTPFSYINPCGYSGLKMCQLANFYQEADIKKVQQQYTAEFVTLLNNSI.

The BPL/LPL catalytic domain occupies 30–206 (PETNDEIWLV…EFVTLLNNSI (177 aa)). Substrate contacts are provided by residues 69-76 (RGGQVTYH), 137-139 (SLG), and 150-152 (GIA). C168 acts as the Acyl-thioester intermediate in catalysis.

This sequence belongs to the LipB family.

It localises to the cytoplasm. The enzyme catalyses octanoyl-[ACP] + L-lysyl-[protein] = N(6)-octanoyl-L-lysyl-[protein] + holo-[ACP] + H(+). It functions in the pathway protein modification; protein lipoylation via endogenous pathway; protein N(6)-(lipoyl)lysine from octanoyl-[acyl-carrier-protein]: step 1/2. Its function is as follows. Catalyzes the transfer of endogenously produced octanoic acid from octanoyl-acyl-carrier-protein onto the lipoyl domains of lipoate-dependent enzymes. Lipoyl-ACP can also act as a substrate although octanoyl-ACP is likely to be the physiological substrate. This chain is Octanoyltransferase, found in Francisella tularensis subsp. holarctica (strain FTNF002-00 / FTA).